The primary structure comprises 357 residues: DNA replication and repair protein RecF (357 aa).

31–38 (GQNGAGKT) contacts ATP.

It belongs to the RecF family.

The protein localises to the cytoplasm. Its function is as follows. The RecF protein is involved in DNA metabolism; it is required for DNA replication and normal SOS inducibility. RecF binds preferentially to single-stranded, linear DNA. It also seems to bind ATP. This is DNA replication and repair protein RecF from Coxiella burnetii (strain CbuK_Q154) (Coxiella burnetii (strain Q154)).